The chain runs to 252 residues: 3-dehydroquinate dehydratase (252 aa).

Residues Ser21, 46 to 48 (EWR), and Arg82 each bind 3-dehydroquinate. His143 serves as the catalytic Proton donor/acceptor. Lys170 (schiff-base intermediate with substrate) is an active-site residue. Positions 213, 232, and 236 each coordinate 3-dehydroquinate.

The protein belongs to the type-I 3-dehydroquinase family. As to quaternary structure, homodimer.

The catalysed reaction is 3-dehydroquinate = 3-dehydroshikimate + H2O. Its pathway is metabolic intermediate biosynthesis; chorismate biosynthesis; chorismate from D-erythrose 4-phosphate and phosphoenolpyruvate: step 3/7. In terms of biological role, involved in the third step of the chorismate pathway, which leads to the biosynthesis of aromatic amino acids. Catalyzes the cis-dehydration of 3-dehydroquinate (DHQ) and introduces the first double bond of the aromatic ring to yield 3-dehydroshikimate. This Escherichia coli O9:H4 (strain HS) protein is 3-dehydroquinate dehydratase.